We begin with the raw amino-acid sequence, 429 residues long: Probable M18 family aminopeptidase 2 (429 aa).

H82, H156, and H401 together coordinate Zn(2+).

The protein belongs to the peptidase M18 family. Requires Zn(2+) as cofactor.

The polypeptide is Probable M18 family aminopeptidase 2 (Pseudomonas paraeruginosa (strain DSM 24068 / PA7) (Pseudomonas aeruginosa (strain PA7))).